Here is a 307-residue protein sequence, read N- to C-terminus: Glutaminase (307 aa).

Residues serine 66, asparagine 116, glutamate 160, asparagine 167, tyrosine 191, tyrosine 243, and valine 261 each coordinate substrate.

Belongs to the glutaminase family. As to quaternary structure, homotetramer.

It catalyses the reaction L-glutamine + H2O = L-glutamate + NH4(+). The sequence is that of Glutaminase from Pseudoalteromonas translucida (strain TAC 125).